A 323-amino-acid polypeptide reads, in one-letter code: Peroxisomal and mitochondrial division factor 2 (323 aa).

Disordered regions lie at residues 1–55 (MAEE…NDAI), 73–92 (ESKA…KSDE), and 120–143 (TART…SQKG). Topologically, residues 1–297 (MAEERSLNGE…WSPNVTAVGS (297 aa)) are cytoplasmic. The segment covering 13–26 (GQDDESFFDSDQQG) has biased composition (acidic residues). A coiled-coil region spans residues 28-278 (DGKSTELNQK…INGLKNVVEE (251 aa)). A helical transmembrane segment spans residues 298 to 318 (GGAVAAVAVAVAGAAVVCYIY). The Mitochondrial intermembrane portion of the chain corresponds to 319–323 (HSRRV).

Homodimer. Interacts with PMD1.

The protein resides in the mitochondrion outer membrane. Its function is as follows. Involved in morphogenesis and proliferation of mitochondria. Does not act redundantly with PMD1. Is not involved in peroxisomal proliferation. This is Peroxisomal and mitochondrial division factor 2 from Arabidopsis thaliana (Mouse-ear cress).